A 372-amino-acid chain; its full sequence is Transaldolase 2 (372 aa).

The Schiff-base intermediate with substrate role is filled by lysine 140.

It belongs to the transaldolase family. Type 2 subfamily.

The protein resides in the cytoplasm. The catalysed reaction is D-sedoheptulose 7-phosphate + D-glyceraldehyde 3-phosphate = D-erythrose 4-phosphate + beta-D-fructose 6-phosphate. The protein operates within carbohydrate degradation; pentose phosphate pathway; D-glyceraldehyde 3-phosphate and beta-D-fructose 6-phosphate from D-ribose 5-phosphate and D-xylulose 5-phosphate (non-oxidative stage): step 2/3. Functionally, transaldolase is important for the balance of metabolites in the pentose-phosphate pathway. The polypeptide is Transaldolase 2 (Streptomyces coelicolor (strain ATCC BAA-471 / A3(2) / M145)).